A 353-amino-acid polypeptide reads, in one-letter code: Nicotinate-nucleotide--dimethylbenzimidazole phosphoribosyltransferase (353 aa).

The active-site Proton acceptor is Glu-320.

It belongs to the CobT family.

The enzyme catalyses 5,6-dimethylbenzimidazole + nicotinate beta-D-ribonucleotide = alpha-ribazole 5'-phosphate + nicotinate + H(+). It functions in the pathway nucleoside biosynthesis; alpha-ribazole biosynthesis; alpha-ribazole from 5,6-dimethylbenzimidazole: step 1/2. Its function is as follows. Catalyzes the synthesis of alpha-ribazole-5'-phosphate from nicotinate mononucleotide (NAMN) and 5,6-dimethylbenzimidazole (DMB). This chain is Nicotinate-nucleotide--dimethylbenzimidazole phosphoribosyltransferase, found in Pseudoalteromonas translucida (strain TAC 125).